Consider the following 294-residue polypeptide: Transmembrane protein 178B (294 aa).

An N-terminal signal peptide occupies residues 1 to 23; sequence MAAGKLLLYAGLSLSLCALGMLA. Transmembrane regions (helical) follow at residues 172–192, 206–226, and 252–272; these read AGFM…GMLG, LLFL…VAGI, and MFCA…CTLA.

It belongs to the TMEM178 family.

The protein localises to the membrane. This Danio rerio (Zebrafish) protein is Transmembrane protein 178B (tmem178b).